Reading from the N-terminus, the 491-residue chain is Glutamyl-tRNA(Gln) amidotransferase subunit A (491 aa).

Active-site charge relay system residues include Lys-77 and Ser-152. Ser-176 acts as the Acyl-ester intermediate in catalysis.

The protein belongs to the amidase family. GatA subfamily. Heterotrimer of A, B and C subunits.

It catalyses the reaction L-glutamyl-tRNA(Gln) + L-glutamine + ATP + H2O = L-glutaminyl-tRNA(Gln) + L-glutamate + ADP + phosphate + H(+). Allows the formation of correctly charged Gln-tRNA(Gln) through the transamidation of misacylated Glu-tRNA(Gln) in organisms which lack glutaminyl-tRNA synthetase. The reaction takes place in the presence of glutamine and ATP through an activated gamma-phospho-Glu-tRNA(Gln). The chain is Glutamyl-tRNA(Gln) amidotransferase subunit A from Chlamydia felis (strain Fe/C-56) (Chlamydophila felis).